The following is a 397-amino-acid chain: Na(+)/H(+) antiporter NhaA 2 (397 aa).

Transmembrane regions (helical) follow at residues 9–29 (LHNP…AMAV), 59–79 (LLLW…GLEL), 95–115 (ILPV…YTLI), 125–145 (GWAI…ALLG), 154–174 (LFLL…IAFF), 177–197 (SELS…LILM), 222–242 (SGVH…LKGE), 260–280 (VVGL…SLQG), 292–312 (LGIA…FVWL), 332–352 (GVAL…SLAF), and 371–391 (LGIL…LRFS).

The protein belongs to the NhaA Na(+)/H(+) (TC 2.A.33) antiporter family.

The protein localises to the cell inner membrane. It carries out the reaction Na(+)(in) + 2 H(+)(out) = Na(+)(out) + 2 H(+)(in). Functionally, na(+)/H(+) antiporter that extrudes sodium in exchange for external protons. This is Na(+)/H(+) antiporter NhaA 2 from Magnetococcus marinus (strain ATCC BAA-1437 / JCM 17883 / MC-1).